Here is a 410-residue protein sequence, read N- to C-terminus: LL-diaminopimelate aminotransferase (410 aa).

Substrate-binding residues include Y15 and G42. Residues Y72, 108–109 (AK), Y132, N187, Y218, and 246–248 (SFS) each bind pyridoxal 5'-phosphate. K109, Y132, and N187 together coordinate substrate. N6-(pyridoxal phosphate)lysine is present on K249. Pyridoxal 5'-phosphate is bound by residues R257 and N292. Positions 292 and 388 each coordinate substrate.

This sequence belongs to the class-I pyridoxal-phosphate-dependent aminotransferase family. LL-diaminopimelate aminotransferase subfamily. In terms of assembly, homodimer. Requires pyridoxal 5'-phosphate as cofactor.

It catalyses the reaction (2S,6S)-2,6-diaminopimelate + 2-oxoglutarate = (S)-2,3,4,5-tetrahydrodipicolinate + L-glutamate + H2O + H(+). It participates in amino-acid biosynthesis; L-lysine biosynthesis via DAP pathway; LL-2,6-diaminopimelate from (S)-tetrahydrodipicolinate (aminotransferase route): step 1/1. In terms of biological role, involved in the synthesis of meso-diaminopimelate (m-DAP or DL-DAP), required for both lysine and peptidoglycan biosynthesis. Catalyzes the direct conversion of tetrahydrodipicolinate to LL-diaminopimelate. Is also able to catalyze the reverse reaction in vitro, i.e. the transamination of LL-diaminopimelate with 2-oxoglutarate to produce 2-oxo-6-aminopimelate (in equilibrium with tetrahydrodipicolinate) and glutamate. Has maximal aminotransferase activity using 2-oxoglutarate as an amino group acceptor, and cannot use oxaloacetate instead of 2-oxoglutarate, although 2-oxoadipate can substitute with 21% relative activity. Cannot use m-DAP, lysine or ornithine as the amino-group donor, when using 2-oxoglutarate as the amino-group acceptor. The protein is LL-diaminopimelate aminotransferase of Methanothermobacter thermautotrophicus (strain ATCC 29096 / DSM 1053 / JCM 10044 / NBRC 100330 / Delta H) (Methanobacterium thermoautotrophicum).